A 1938-amino-acid polypeptide reads, in one-letter code: Autophagy-related protein 2 homolog A (1938 aa).

The 98-residue stretch at 14-111 (ERVCRYLLHH…QLTLQPRRGP (98 aa)) folds into the Chorein N-terminal domain. A phosphoserine mark is found at serine 765, serine 878, serine 892, serine 894, serine 1266, serine 1301, and serine 1309. The interval 1242–1272 (DLHPPPRPPSPTEIAGQKLSESPASLPSCPP) is disordered. The interval 1315-1359 (LFPGERSGAPPPSPPVGGPAGSLGSCSEEKEDEREEEGDGDTLDS) is disordered. The segment covering 1343–1359 (EKEDEREEEGDGDTLDS) has biased composition (acidic residues). Positions 1358–1404 (DSDEFCILDAPGLGIPPRDGEPVVTQLHPGPIVVRDGYFSRPIGSTD) are WIPI-interacting. Serine 1402 carries the phosphoserine modification. 2 disordered regions span residues 1438–1476 (PHPG…GSGR) and 1614–1657 (GETS…PSPP). Positions 1446 to 1464 (TGLSGPRSSPSRCSGPNRP) are enriched in low complexity.

The protein belongs to the ATG2 family. Interacts with ATG9A (via C-terminus). Interacts (via WIPI-interacting region) with WDR45B/WIPI3. Interacts (via WIPI-interacting region) with WDR45/WIPI4. Interacts with TMEM41B. Interacts with VMP1.

The protein resides in the preautophagosomal structure membrane. The protein localises to the lipid droplet. It is found in the endoplasmic reticulum membrane. The catalysed reaction is a 1,2-diacyl-sn-glycero-3-phospho-L-serine(in) = a 1,2-diacyl-sn-glycero-3-phospho-L-serine(out). It catalyses the reaction a 1,2-diacyl-sn-glycero-3-phosphoethanolamine(in) = a 1,2-diacyl-sn-glycero-3-phosphoethanolamine(out). In terms of biological role, lipid transfer protein involved in autophagosome assembly. Tethers the edge of the isolation membrane (IM) to the endoplasmic reticulum (ER) and mediates direct lipid transfer from ER to IM for IM expansion. Binds to the ER exit site (ERES), which is the membrane source for autophagosome formation, and extracts phospholipids from the membrane source and transfers them to ATG9 (ATG9A or ATG9B) to the IM for membrane expansion. Lipid transfer activity is enhanced by WIPI1 and WDR45/WIPI4, which promote ATG2A-association with phosphatidylinositol 3-monophosphate (PI3P)-containing membranes. Also regulates lipid droplets morphology and distribution within the cell. This is Autophagy-related protein 2 homolog A from Homo sapiens (Human).